Here is a 155-residue protein sequence, read N- to C-terminus: SsrA-binding protein (155 aa).

The protein belongs to the SmpB family.

The protein localises to the cytoplasm. Its function is as follows. Required for rescue of stalled ribosomes mediated by trans-translation. Binds to transfer-messenger RNA (tmRNA), required for stable association of tmRNA with ribosomes. tmRNA and SmpB together mimic tRNA shape, replacing the anticodon stem-loop with SmpB. tmRNA is encoded by the ssrA gene; the 2 termini fold to resemble tRNA(Ala) and it encodes a 'tag peptide', a short internal open reading frame. During trans-translation Ala-aminoacylated tmRNA acts like a tRNA, entering the A-site of stalled ribosomes, displacing the stalled mRNA. The ribosome then switches to translate the ORF on the tmRNA; the nascent peptide is terminated with the 'tag peptide' encoded by the tmRNA and targeted for degradation. The ribosome is freed to recommence translation, which seems to be the essential function of trans-translation. The sequence is that of SsrA-binding protein from Lactococcus lactis subsp. cremoris (strain MG1363).